Here is a 232-residue protein sequence, read N- to C-terminus: MLTRKQYELLRFINERLKEAGVPPSFDEMKDALDLRSKSGIHRLITALEERGFIRRLPNRARAIEVIKLPELSQAAGNRRGFTPSVIEGNLGKVRTSTPALEDGERPVAVPVMGRIAAGTPIEALQTRSHTISVPADMLGNGDHYALEVRGDSMVDAGILDGDMALIQRNETADTGDIVVALIDDEEATLKRFRRRGASIALEPANTAYEVRILPPNRVKIQGKLVGLYRKY.

The H-T-H motif DNA-binding region spans 26 to 46; sequence FDEMKDALDLRSKSGIHRLIT. Residues S153 and K191 each act as for autocatalytic cleavage activity in the active site.

The protein belongs to the peptidase S24 family. As to quaternary structure, homodimer.

The catalysed reaction is Hydrolysis of Ala-|-Gly bond in repressor LexA.. Its function is as follows. Represses a number of genes involved in the response to DNA damage (SOS response), including recA and lexA. In the presence of single-stranded DNA, RecA interacts with LexA causing an autocatalytic cleavage which disrupts the DNA-binding part of LexA, leading to derepression of the SOS regulon and eventually DNA repair. In Bradyrhizobium sp. (strain ORS 278), this protein is LexA repressor.